A 489-amino-acid polypeptide reads, in one-letter code: Glycogen synthase (489 aa).

Lys15 provides a ligand contact to ADP-alpha-D-glucose.

Belongs to the glycosyltransferase 1 family. Bacterial/plant glycogen synthase subfamily.

The catalysed reaction is [(1-&gt;4)-alpha-D-glucosyl](n) + ADP-alpha-D-glucose = [(1-&gt;4)-alpha-D-glucosyl](n+1) + ADP + H(+). It participates in glycan biosynthesis; glycogen biosynthesis. Its function is as follows. Synthesizes alpha-1,4-glucan chains using ADP-glucose. The protein is Glycogen synthase of Francisella tularensis subsp. holarctica (strain FTNF002-00 / FTA).